Here is a 362-residue protein sequence, read N- to C-terminus: Histidine biosynthesis bifunctional protein HisB (362 aa).

Residues 1-173 form a histidinol-phosphatase region; sequence MQPTLFIDRD…TVTNCGKRPP (173 aa). The Nucleophile role is filled by D8. The Mg(2+) site is built by D8 and D10. D10 serves as the catalytic Proton donor. Residues C91, H93, C99, and C101 each contribute to the Zn(2+) site. D128 is a binding site for Mg(2+). The segment at 174 to 362 is imidazoleglycerol-phosphate dehydratase; sequence RFAEVIRQTK…NEMPSSKGVL (189 aa).

This sequence in the N-terminal section; belongs to the histidinol-phosphatase family. The protein in the C-terminal section; belongs to the imidazoleglycerol-phosphate dehydratase family. Mg(2+) serves as cofactor. Requires Zn(2+) as cofactor.

It localises to the cytoplasm. It carries out the reaction D-erythro-1-(imidazol-4-yl)glycerol 3-phosphate = 3-(imidazol-4-yl)-2-oxopropyl phosphate + H2O. It catalyses the reaction L-histidinol phosphate + H2O = L-histidinol + phosphate. Its pathway is amino-acid biosynthesis; L-histidine biosynthesis; L-histidine from 5-phospho-alpha-D-ribose 1-diphosphate: step 6/9. The protein operates within amino-acid biosynthesis; L-histidine biosynthesis; L-histidine from 5-phospho-alpha-D-ribose 1-diphosphate: step 8/9. This chain is Histidine biosynthesis bifunctional protein HisB, found in Haemophilus influenzae (strain 86-028NP).